Here is a 435-residue protein sequence, read N- to C-terminus: T-box transcription factor T (435 aa).

The T-box DNA-binding region spans 51–219 (LWLRFKELTN…YNPFAKAFLD (169 aa)). A disordered region spans residues 279–308 (YPTLRSHRSSPYPSPYAHRNNSPTYSDNSP). Residues 297 to 308 (RNNSPTYSDNSP) are compositionally biased toward polar residues.

In terms of assembly, monomer. Detected in testis, but not in other, normal tissues. Detected in lung tumors (at protein level).

It is found in the nucleus. Its function is as follows. Involved in the transcriptional regulation of genes required for mesoderm formation and differentiation. Binds to a palindromic T site 5'-TTCACACCTAGGTGTGAA-3' DNA sequence and activates gene transcription when bound to such a site. The chain is T-box transcription factor T from Homo sapiens (Human).